The sequence spans 655 residues: Very long-chain specific acyl-CoA dehydrogenase, mitochondrial (655 aa).

Residues 1 to 40 (MQAARIAPSLGRQLLRFGGGSSRPTALLGQPWPGPARRPY) constitute a mitochondrion transit peptide. The interval 41–482 (AGGAAQLALD…ALQGCMDKGK (442 aa)) is catalytic. Lysine 51 is subject to N6-acetyllysine. An N6-acetyllysine; alternate modification is found at lysine 71. N6-succinyllysine; alternate is present on lysine 71. Lysine 195 carries the N6-succinyllysine modification. 214–223 (FCLTEPSSGS) provides a ligand contact to FAD. Position 237 is an S-nitrosocysteine (cysteine 237). N6-acetyllysine; alternate is present on lysine 239. An N6-succinyllysine; alternate modification is found at lysine 239. FAD is bound at residue 249–251 (WIS). N6-acetyllysine; alternate occurs at positions 276 and 278. Residues lysine 276 and lysine 278 each carry the N6-succinyllysine; alternate modification. The residue at position 298 (lysine 298) is an N6-acetyllysine. At lysine 331 the chain carries N6-acetyllysine; alternate. The residue at position 331 (lysine 331) is an N6-succinyllysine; alternate. Lysine 372 is modified (N6-succinyllysine). 461 to 463 (FEG) contributes to the substrate binding site. The active-site Proton acceptor is glutamate 462. Position 464–466 (464–466 (TND)) interacts with FAD. Position 482 is an N6-acetyllysine; alternate (lysine 482). Residue lysine 482 is modified to N6-succinyllysine; alternate. Positions 483 to 516 (ELSGLGSALKNPFGNAGLLLGEAGKQLRRRAGLG) are membrane-anchoring. Serine 517 and serine 522 each carry phosphoserine. Position 550 is an N6-acetyllysine (lysine 550). Lysine 556 bears the N6-acetyllysine; alternate mark. Lysine 556 is subject to N6-succinyllysine; alternate. An FAD-binding site is contributed by glutamine 562. The residue at position 639 (lysine 639) is an N6-succinyllysine.

The protein belongs to the acyl-CoA dehydrogenase family. In terms of assembly, homodimer. Homodimerizes after import into the mitochondrion. Requires FAD as cofactor. Post-translationally, S-nitrosylation at Cys-237 in liver improves catalytic efficiency.

It localises to the mitochondrion inner membrane. The catalysed reaction is a very-long-chain 2,3-saturated fatty acyl-CoA + oxidized [electron-transfer flavoprotein] + H(+) = a very-long-chain (2E)-enoyl-CoA + reduced [electron-transfer flavoprotein]. It catalyses the reaction dodecanoyl-CoA + oxidized [electron-transfer flavoprotein] + H(+) = (2E)-dodecenoyl-CoA + reduced [electron-transfer flavoprotein]. It carries out the reaction tetradecanoyl-CoA + oxidized [electron-transfer flavoprotein] + H(+) = (2E)-tetradecenoyl-CoA + reduced [electron-transfer flavoprotein]. The enzyme catalyses oxidized [electron-transfer flavoprotein] + hexadecanoyl-CoA + H(+) = (2E)-hexadecenoyl-CoA + reduced [electron-transfer flavoprotein]. The catalysed reaction is octadecanoyl-CoA + oxidized [electron-transfer flavoprotein] + H(+) = (2E)-octadecenoyl-CoA + reduced [electron-transfer flavoprotein]. It catalyses the reaction eicosanoyl-CoA + oxidized [electron-transfer flavoprotein] + H(+) = (2E)-eicosenoyl-CoA + reduced [electron-transfer flavoprotein]. It carries out the reaction docosanoyl-CoA + oxidized [electron-transfer flavoprotein] + H(+) = (2E)-docosenoyl-CoA + reduced [electron-transfer flavoprotein]. The enzyme catalyses tetracosanoyl-CoA + oxidized [electron-transfer flavoprotein] + H(+) = (2E)-tetracosenoyl-CoA + reduced [electron-transfer flavoprotein]. Its pathway is lipid metabolism; mitochondrial fatty acid beta-oxidation. In terms of biological role, very long-chain specific acyl-CoA dehydrogenase is one of the acyl-CoA dehydrogenases that catalyze the first step of mitochondrial fatty acid beta-oxidation, an aerobic process breaking down fatty acids into acetyl-CoA and allowing the production of energy from fats. The first step of fatty acid beta-oxidation consists in the removal of one hydrogen from C-2 and C-3 of the straight-chain fatty acyl-CoA thioester, resulting in the formation of trans-2-enoyl-CoA. Among the different mitochondrial acyl-CoA dehydrogenases, very long-chain specific acyl-CoA dehydrogenase acts specifically on acyl-CoAs with saturated 12 to 24 carbons long primary chains. The protein is Very long-chain specific acyl-CoA dehydrogenase, mitochondrial of Macaca fascicularis (Crab-eating macaque).